A 363-amino-acid polypeptide reads, in one-letter code: Cobalt-precorrin-5B C(1)-methyltransferase (363 aa).

Belongs to the CbiD family.

It catalyses the reaction Co-precorrin-5B + S-adenosyl-L-methionine = Co-precorrin-6A + S-adenosyl-L-homocysteine. It participates in cofactor biosynthesis; adenosylcobalamin biosynthesis; cob(II)yrinate a,c-diamide from sirohydrochlorin (anaerobic route): step 6/10. In terms of biological role, catalyzes the methylation of C-1 in cobalt-precorrin-5B to form cobalt-precorrin-6A. The chain is Cobalt-precorrin-5B C(1)-methyltransferase from Burkholderia mallei (strain ATCC 23344).